Reading from the N-terminus, the 611-residue chain is UvrABC system protein C (611 aa).

A GIY-YIG domain is found at 12–96; it reads DQPGIYQYFD…IKQLKPKYNI (85 aa). The UVR domain occupies 202–237; the sequence is EKILEILNQKMQKYAENLQFEEAAEIRDRIKSIESA.

The protein belongs to the UvrC family. Interacts with UvrB in an incision complex.

It localises to the cytoplasm. The UvrABC repair system catalyzes the recognition and processing of DNA lesions. UvrC both incises the 5' and 3' sides of the lesion. The N-terminal half is responsible for the 3' incision and the C-terminal half is responsible for the 5' incision. This is UvrABC system protein C from Nautilia profundicola (strain ATCC BAA-1463 / DSM 18972 / AmH).